The primary structure comprises 176 residues: Ribosome maturation factor RimM (176 aa).

The region spanning 97 to 176 is the PRC barrel domain; it reads DNDFYHRDLI…QIVVDWDPDF (80 aa).

The protein belongs to the RimM family. In terms of assembly, binds ribosomal protein uS19.

Its subcellular location is the cytoplasm. In terms of biological role, an accessory protein needed during the final step in the assembly of 30S ribosomal subunit, possibly for assembly of the head region. Essential for efficient processing of 16S rRNA. May be needed both before and after RbfA during the maturation of 16S rRNA. It has affinity for free ribosomal 30S subunits but not for 70S ribosomes. The polypeptide is Ribosome maturation factor RimM (Shewanella denitrificans (strain OS217 / ATCC BAA-1090 / DSM 15013)).